Reading from the N-terminus, the 288-residue chain is ATP synthase gamma chain (288 aa).

It belongs to the ATPase gamma chain family. F-type ATPases have 2 components, CF(1) - the catalytic core - and CF(0) - the membrane proton channel. CF(1) has five subunits: alpha(3), beta(3), gamma(1), delta(1), epsilon(1). CF(0) has three main subunits: a, b and c.

It localises to the cell inner membrane. Produces ATP from ADP in the presence of a proton gradient across the membrane. The gamma chain is believed to be important in regulating ATPase activity and the flow of protons through the CF(0) complex. This chain is ATP synthase gamma chain, found in Rickettsia felis (strain ATCC VR-1525 / URRWXCal2) (Rickettsia azadi).